The primary structure comprises 228 residues: Probable U3 small nucleolar RNA-associated protein 11 (228 aa).

Disordered stretches follow at residues methionine 1–lysine 23 and serine 192–leucine 211. Residues alanine 12–lysine 23 are compositionally biased toward basic and acidic residues.

Belongs to the UTP11 family. As to quaternary structure, component of the ribosomal small subunit (SSU) processome.

The protein localises to the nucleus. It localises to the nucleolus. Its function is as follows. Involved in nucleolar processing of pre-18S ribosomal RNA. The protein is Probable U3 small nucleolar RNA-associated protein 11 of Arabidopsis thaliana (Mouse-ear cress).